We begin with the raw amino-acid sequence, 424 residues long: Serine--tRNA ligase 1 (424 aa).

L-serine is bound at residue 232 to 234 (TAE). Residue 263–265 (RSE) coordinates ATP. Residue glutamate 286 participates in L-serine binding. An ATP-binding site is contributed by 350–353 (EISS). Serine 386 contributes to the L-serine binding site.

The protein belongs to the class-II aminoacyl-tRNA synthetase family. Type-1 seryl-tRNA synthetase subfamily. Homodimer. The tRNA molecule binds across the dimer.

It localises to the cytoplasm. It catalyses the reaction tRNA(Ser) + L-serine + ATP = L-seryl-tRNA(Ser) + AMP + diphosphate + H(+). The catalysed reaction is tRNA(Sec) + L-serine + ATP = L-seryl-tRNA(Sec) + AMP + diphosphate + H(+). The protein operates within aminoacyl-tRNA biosynthesis; selenocysteinyl-tRNA(Sec) biosynthesis; L-seryl-tRNA(Sec) from L-serine and tRNA(Sec): step 1/1. In terms of biological role, catalyzes the attachment of serine to tRNA(Ser). Is also able to aminoacylate tRNA(Sec) with serine, to form the misacylated tRNA L-seryl-tRNA(Sec), which will be further converted into selenocysteinyl-tRNA(Sec). This chain is Serine--tRNA ligase 1, found in Clostridium acetobutylicum (strain ATCC 824 / DSM 792 / JCM 1419 / IAM 19013 / LMG 5710 / NBRC 13948 / NRRL B-527 / VKM B-1787 / 2291 / W).